Reading from the N-terminus, the 191-residue chain is UPF0302 protein USA300HOU_1400 (191 aa).

It belongs to the UPF0302 family.

The chain is UPF0302 protein USA300HOU_1400 from Staphylococcus aureus (strain USA300 / TCH1516).